Here is an 868-residue protein sequence, read N- to C-terminus: Protein translocase subunit SecA (868 aa).

ATP contacts are provided by residues glutamine 87, glycine 105 to threonine 109, and aspartate 500. Residues cysteine 849, cysteine 851, cysteine 860, and histidine 861 each coordinate Zn(2+).

It belongs to the SecA family. As to quaternary structure, monomer and homodimer. Part of the essential Sec protein translocation apparatus which comprises SecA, SecYEG and auxiliary proteins SecDF-YajC and YidC. Zn(2+) serves as cofactor.

It localises to the cell membrane. It is found in the cytoplasm. It carries out the reaction ATP + H2O + cellular proteinSide 1 = ADP + phosphate + cellular proteinSide 2.. In terms of biological role, part of the Sec protein translocase complex. Interacts with the SecYEG preprotein conducting channel. Has a central role in coupling the hydrolysis of ATP to the transfer of proteins into and across the cell membrane, serving both as a receptor for the preprotein-SecB complex and as an ATP-driven molecular motor driving the stepwise translocation of polypeptide chains across the membrane. In Wolbachia pipientis wMel, this protein is Protein translocase subunit SecA.